We begin with the raw amino-acid sequence, 124 residues long: MNALGRHILAEVYGCDSRILDDVEMIEDIMVQAAIATGAEVREVAFHKFNPQGVSGVVVISESHLTIHTWPELGYAAVDVFTCGDHVNPWDGVNYIARMLKAENMTATEVKRGVFEKPVKVANF.

Ser-63 acts as the Schiff-base intermediate with substrate; via pyruvic acid in catalysis. Ser-63 is subject to Pyruvic acid (Ser); by autocatalysis. His-68 functions as the Proton acceptor; for processing activity in the catalytic mechanism. Cys-83 (proton donor; for catalytic activity) is an active-site residue.

Belongs to the prokaryotic AdoMetDC family. Type 1 subfamily. Heterotetramer of two alpha and two beta chains arranged as a dimer of alpha/beta heterodimers. Pyruvate is required as a cofactor. Is synthesized initially as an inactive proenzyme. Formation of the active enzyme involves a self-maturation process in which the active site pyruvoyl group is generated from an internal serine residue via an autocatalytic post-translational modification. Two non-identical subunits are generated from the proenzyme in this reaction, and the pyruvate is formed at the N-terminus of the alpha chain, which is derived from the carboxyl end of the proenzyme. The post-translation cleavage follows an unusual pathway, termed non-hydrolytic serinolysis, in which the side chain hydroxyl group of the serine supplies its oxygen atom to form the C-terminus of the beta chain, while the remainder of the serine residue undergoes an oxidative deamination to produce ammonia and the pyruvoyl group blocking the N-terminus of the alpha chain.

It catalyses the reaction S-adenosyl-L-methionine + H(+) = S-adenosyl 3-(methylsulfanyl)propylamine + CO2. It participates in amine and polyamine biosynthesis; S-adenosylmethioninamine biosynthesis; S-adenosylmethioninamine from S-adenosyl-L-methionine: step 1/1. Its function is as follows. Catalyzes the decarboxylation of S-adenosylmethionine to S-adenosylmethioninamine (dcAdoMet), the propylamine donor required for the synthesis of the polyamines spermine and spermidine from the diamine putrescine. This Caldanaerobacter subterraneus subsp. tengcongensis (strain DSM 15242 / JCM 11007 / NBRC 100824 / MB4) (Thermoanaerobacter tengcongensis) protein is S-adenosylmethionine decarboxylase proenzyme.